We begin with the raw amino-acid sequence, 458 residues long: Nuclear transcription factor Y subunit gamma (458 aa).

Low complexity predominate over residues 305–315 (QQQFSQFTDGQ). The segment at 305–379 (QQQFSQFTDG…QQSSTSPPPS (75 aa)) is disordered. Over residues 339–351 (TGNSTPCTSSLPT) the composition is skewed to polar residues.

This sequence belongs to the NFYC/HAP5 subunit family. Heterotrimeric transcription factor composed of three components, NF-YA, NF-YB and NF-YC. NF-YB and NF-YC must interact and dimerize for NF-YA association and DNA binding.

The protein localises to the nucleus. In terms of biological role, component of the sequence-specific heterotrimeric transcription factor (NF-Y) which specifically recognizes a 5'-CCAAT-3' box motif found in the promoters of its target genes. NF-Y can function as both an activator and a repressor, depending on its interacting cofactors. The chain is Nuclear transcription factor Y subunit gamma (NFYC) from Homo sapiens (Human).